Reading from the N-terminus, the 253-residue chain is Nurim homolog (253 aa).

Residues 1-2 (MT) lie on the Nuclear side of the membrane. A helical transmembrane segment spans residues 3 to 30 (SIAKSIVLLASLATFAYSLYVVGSLMMF). Over 31-56 (LSTPRSISKAHTWIFNLLDNKSRLQT) the chain is Perinuclear space. The helical transmembrane segment at 57–78 (AYGPVVFDTLYLIGFIFQHSFL) threads the bilayer. Topologically, residues 79–96 (KSAVVKKLLAKLGLSGAE) are nuclear. The chain crosses the membrane as a helical span at residues 97-113 (RTIYSLTSSLCLHYLIV). At 114-132 (NWLPAQSIVLWQIDVEQSA) the chain is on the perinuclear space side. A helical transmembrane segment spans residues 133–161 (PLWWTFVITHGICWVVIFGGSLVMDLPEL). Residues 162–188 (LGVKQAYYDLKAYGPPISYKSGELRNL) lie on the Nuclear side of the membrane. The helical transmembrane segment at 189 to 207 (YAHVRHPSFVGLSVILFAT) threads the bilayer. At 208 to 213 (NVMSVD) the chain is on the perinuclear space side. Residues 214 to 231 (RLVMALLLTTYMYLAWST) traverse the membrane as a helical segment. Over 232–253 (DQKDVAYQKIQLQRKKLELKAK) the chain is Nuclear.

It belongs to the nurim family.

The protein resides in the nucleus inner membrane. The sequence is that of Nurim homolog (nrm) from Drosophila melanogaster (Fruit fly).